The primary structure comprises 310 residues: Olfactory receptor 2A25 (310 aa).

The Extracellular portion of the chain corresponds to 1–24; it reads MGGNQTSITEFLLLGFPIGPRIQM. The N-linked (GlcNAc...) asparagine glycan is linked to N4. Residues 25–48 traverse the membrane as a helical segment; sequence LLFGLFSLFYIFILLGNGTILGLI. Residues 49–56 are Cytoplasmic-facing; it reads SLDSRLHT. The helical transmembrane segment at 57–78 threads the bilayer; the sequence is PMYFFLSHLAVVDIACACSTVP. At 79-99 the chain is on the extracellular side; that stretch reads QMLVNLLHPAKPISFAGCMTQ. C96 and C188 are oxidised to a cystine. A helical membrane pass occupies residues 100–119; that stretch reads MFLFLSFAHTECLLLVVMSY. Topologically, residues 120-138 are cytoplasmic; it reads DRYVAICHPLRYSTIMTWK. A helical membrane pass occupies residues 139–157; it reads VCITLALTSWILGVLLALV. At 158-195 the chain is on the extracellular side; that stretch reads HLVLLLPLSFCGPQKLNHFFCEIMAVLKLACADTHINE. A helical transmembrane segment spans residues 196 to 218; the sequence is VMVLAGAVSVLVGAFFSTVISYV. Residues 219-235 lie on the Cytoplasmic side of the membrane; that stretch reads HILCAILKIQSGEGCQK. The chain crosses the membrane as a helical span at residues 236–258; it reads AFSICSSHLCVVGLFYGTAIIMY. Residues 259 to 271 lie on the Extracellular side of the membrane; the sequence is VEPQYESPKEQKK. Residues 272–291 form a helical membrane-spanning segment; it reads YLLLFHSLFNPMLNPLIYSL. Residues 292 to 310 are Cytoplasmic-facing; it reads RNKEVQGTLKRMLEKKRTS.

It belongs to the G-protein coupled receptor 1 family.

It localises to the cell membrane. In terms of biological role, odorant receptor. This chain is Olfactory receptor 2A25 (OR2A25), found in Homo sapiens (Human).